We begin with the raw amino-acid sequence, 217 residues long: GrpE protein homolog 1, mitochondrial (217 aa).

The N-terminal 27 residues, 1-27 (MAARCVRLARRSLPALALSFRPSPRLL), are a transit peptide targeting the mitochondrion. The interval 37–56 (GQNLDEDLGHCEPKTDPPSA) is disordered. Lysine 94 carries the post-translational modification N6-acetyllysine; alternate. Residue lysine 94 is modified to N6-succinyllysine; alternate. Residue lysine 100 is modified to N6-acetyllysine. Residue lysine 120 is modified to N6-succinyllysine. The residue at position 215 (lysine 215) is an N6-acetyllysine; alternate. An N6-succinyllysine; alternate modification is found at lysine 215.

It belongs to the GrpE family. In terms of assembly, probable component of the PAM complex at least composed of a mitochondrial HSP70 protein, GRPEL1 or GRPEL2, TIMM44, TIMM16/PAM16 and TIMM14/DNAJC19. Binds to HSP70, HSC70 and HSJ1B.

It localises to the mitochondrion matrix. In terms of biological role, essential component of the PAM complex, a complex required for the translocation of transit peptide-containing proteins from the inner membrane into the mitochondrial matrix in an ATP-dependent manner. Seems to control the nucleotide-dependent binding of mitochondrial HSP70 to substrate proteins. The chain is GrpE protein homolog 1, mitochondrial (Grpel1) from Mus musculus (Mouse).